A 199-amino-acid chain; its full sequence is Prolactin-1 (199 aa).

3 cysteine pairs are disulfide-bonded: cysteine 4–cysteine 11, cysteine 58–cysteine 174, and cysteine 191–cysteine 199. Asparagine 60 is a glycosylation site (N-linked (GlcNAc...) asparagine).

The protein belongs to the somatotropin/prolactin family. In terms of processing, glycosylated.

Its subcellular location is the secreted. The polypeptide is Prolactin-1 (Crocodylus novaeguineae (Crocodile)).